Reading from the N-terminus, the 178-residue chain is MRHNKAGRRLGRTTSHRIAMFRNMVTSFLEHERITTTDAKAKELRSIAEKMITLGKRGDLHAQRQAASYIRDKKVVTKLFSTIAPRYKERDGGYTRIIKLGIRPGDNAPLSVIELVEEQVNKKEKKAKPAKAAIVATAPAVEQAAVLTSPADEPVVAEENAPQSAVKDAVDECEGKAD.

The tract at residues 150–178 (PADEPVVAEENAPQSAVKDAVDECEGKAD) is disordered. The span at 168-178 (DAVDECEGKAD) shows a compositional bias: basic and acidic residues.

It belongs to the bacterial ribosomal protein bL17 family. Part of the 50S ribosomal subunit. Contacts protein L32.

This is Large ribosomal subunit protein bL17 from Geobacter metallireducens (strain ATCC 53774 / DSM 7210 / GS-15).